A 356-amino-acid polypeptide reads, in one-letter code: uncharacterized protein (356 aa).

The protein localises to the cytoplasm. Its subcellular location is the nucleus. This is an uncharacterized protein from Saccharomyces cerevisiae (strain ATCC 204508 / S288c) (Baker's yeast).